A 355-amino-acid polypeptide reads, in one-letter code: Tetraspanin-10 (355 aa).

Residues 1 to 33 (MEEGERSPLLSQETAGQKPLSVHRPPTSGCLGP) are disordered. The Cytoplasmic portion of the chain corresponds to 1–78 (MEEGERSPLL…LSPGSSCVKY (78 aa)). Residues 79–99 (LIFLSNFPFSLLGLLALAIGL) form a helical membrane-spanning segment. Topologically, residues 100–120 (WGLAVKGSLGSDLGGPLPTDP) are extracellular. Residues 121–141 (MLGLALGGLVVSAASLAGCLG) form a helical membrane-spanning segment. The Cytoplasmic portion of the chain corresponds to 142-154 (ALCENTCLLRGFS). A helical membrane pass occupies residues 155 to 175 (GGILAFLVLEAVAGALVVALW). Topologically, residues 176-355 (GPLQDSLEHT…APPAAKPARG (180 aa)) are extracellular. Intrachain disulfides connect C212/C279, C213/C243, C229/C237, and C244/C258. N228 is a glycosylation site (N-linked (GlcNAc...) asparagine). A disordered region spans residues 327 to 355 (YGPGAHGEDRAGPQSPSPGAPPAAKPARG). Residues 341 to 355 (SPSPGAPPAAKPARG) are compositionally biased toward pro residues.

It belongs to the tetraspanin (TM4SF) family. Interacts with ADAM10. In terms of tissue distribution, expressed in the eye, including iris, ciliary body, retinal pigment epithelium, but not lens (protein level).

It localises to the cell membrane. Functionally, part of TspanC8 subgroup, composed of 6 members that interact with the transmembrane metalloprotease ADAM10. This interaction is required for ADAM10 exit from the endoplasmic reticulum and for enzymatic maturation and trafficking to the cell surface as well as substrate specificity. Different TspanC8/ADAM10 complexes have distinct substrates. The chain is Tetraspanin-10 from Homo sapiens (Human).